The sequence spans 2546 residues: Formin-J (2546 aa).

Disordered regions lie at residues 1–40 (MEENTNNIDNGHMGDNNNENNNNSNNNNNNNSNSSSSFVK), 61–108 (ENSN…PLSE), 188–270 (KNIT…PNSA), 369–414 (TTNN…SSSS), 502–541 (TNSFGSSTTTTISGGGSGSSSVNSSGGGSGTTPINVTPNS), 802–849 (SSIS…NTRK), 879–898 (TSVPTSPTSKNPLITSNNNN), 987–1101 (TTNN…GGIG), 1485–1529 (PKSK…ASLS), 1558–1601 (KRSK…FKSP), 1659–1775 (INNI…KVNS), 1840–1869 (VPTTTTSTTTTTQTTPPPVTINEKEKETQS), and 2014–2033 (SNLSRKSSKSSNNSSTSSLE). 2 stretches are compositionally biased toward low complexity: residues 16 to 37 (NNNENNNNSNNNNNNNSNSSSS) and 62 to 98 (NSNNSITSGGSSSNSGEISSNNNNNNNNNGILKNSTS). Composition is skewed to polar residues over residues 99-108 (GSKDNTPLSE) and 188-198 (KNITPSKNNSP). 2 stretches are compositionally biased toward low complexity: residues 203 to 237 (NNNNNNNNNNNNNNNNNNNNNNNNNNNNNNNNNNN) and 247 to 270 (NKNSIYNTNSNNNSNTTNSTPNSA). Polar residues predominate over residues 377 to 389 (AESLTTYSESSEI). Composition is skewed to low complexity over residues 390–414 (STDSTGVCSSSSSTSSTLSSKSSSS) and 502–513 (TNSFGSSTTTTI). One can recognise an FHA domain in the interval 391-444 (TDSTGVCSSSSSTSSTLSSKSSSSSSFNKFMEFLLIYIEDNDSTNGTWVNGNKL). The GBD/FH3 domain maps to 457 to 963 (KITLSTPDFS…SSISNEQEYQ (507 aa)). 2 stretches are compositionally biased toward polar residues: residues 879–891 (TSVPTSPTSKNPL) and 992–1007 (SSAKNIEVDSSVNKSP). Residues 1033–1042 (VPPPPPPPPG) show a composition bias toward pro residues. Over residues 1043 to 1056 (GNNNNESDVPSSSG) the composition is skewed to low complexity. Over residues 1057–1097 (GPPPPPPPPPPPGKSSGGGPPPPPPPPPKGGKGGPPPPPPI) the composition is skewed to pro residues. The region spanning 1072–1098 (SGGGPPPPPPPPPKGGKGGPPPPPPIG) is the FH1 domain. The 390-residue stretch at 1106-1495 (KVKEEQPSVP…KSKKYQEQQN (390 aa)) folds into the FH2 domain. The span at 1492–1502 (EQQNKPTQNND) shows a compositional bias: polar residues. The segment covering 1507–1529 (SKLSNLPSSSSINDESSSSASLS) has biased composition (low complexity). The 31-residue stretch at 1563 to 1593 (EQEPVVEPIQITPKVGSAASAEPSPSIKSRD) folds into the DAD domain. The span at 1665-1679 (SSSSSSSSSSSSSSS) shows a compositional bias: low complexity. Residues 1687–1717 (HNTESEIKKEFISNSSMDKDKEKIKEKEKGT) are compositionally biased toward basic and acidic residues. Over residues 1732-1745 (KSTTTSPSSSSSKK) the composition is skewed to low complexity. Positions 1746–1757 (QIPSLSECLQES) are enriched in polar residues. 2 stretches are compositionally biased toward low complexity: residues 1763-1775 (RSSSYSPNSKVNS) and 1841-1853 (PTTTTSTTTTTQT). Positions 2067–2118 (IDDNQQKQQKQQQQQQQQQQQQQQLPQPQQQQQQQQQQQQQQQQQQQQQQQQ) form a coiled coil. A compositionally biased stretch (low complexity) spans 2121–2154 (QQSTTTTTISTHHPQLKQVQPQSPSSLSQQPTQQ). Disordered stretches follow at residues 2121–2369 (QQST…PKTV), 2381–2473 (SHKK…SYSS), and 2485–2510 (SPSSSITSCKPSPGAVSSTSSTLKTP). Over residues 2160–2179 (QPSSPLQSHYKPQQKPQTTY) the composition is skewed to polar residues. Low complexity-rich tracts occupy residues 2188 to 2206 (ANPFPSSTTSTNSSPSNAS) and 2237 to 2256 (SSASSNSSSVSGSSQSTPLS). Over residues 2274–2287 (TPPSSSISNSTATT) the composition is skewed to polar residues. The span at 2302–2315 (SPSSSSLEQSSNAS) shows a compositional bias: low complexity. The segment covering 2332–2342 (FKKHKKSHSKS) has biased composition (basic residues). 3 stretches are compositionally biased toward low complexity: residues 2388–2439 (VDQS…SSSS), 2459–2473 (NISSGNISNNTSYSS), and 2485–2497 (SPSSSITSCKPSP). Polar residues predominate over residues 2499–2508 (AVSSTSSTLK).

This sequence belongs to the formin homology family. Diaphanous subfamily. As to quaternary structure, interacts (via GBD/FH3 domain) with activated Rho-GTPases.

Its function is as follows. Formins play an important role in the nucleation of actin and the formation of linear actin filaments. This is Formin-J (forJ) from Dictyostelium discoideum (Social amoeba).